A 60-amino-acid polypeptide reads, in one-letter code: Large ribosomal subunit protein bL32 (60 aa).

This sequence belongs to the bacterial ribosomal protein bL32 family.

The chain is Large ribosomal subunit protein bL32 from Thermosipho melanesiensis (strain DSM 12029 / CIP 104789 / BI429).